The primary structure comprises 115 residues: Large ribosomal subunit protein bL20 (115 aa).

It belongs to the bacterial ribosomal protein bL20 family.

Binds directly to 23S ribosomal RNA and is necessary for the in vitro assembly process of the 50S ribosomal subunit. It is not involved in the protein synthesizing functions of that subunit. This Prochlorococcus marinus (strain MIT 9303) protein is Large ribosomal subunit protein bL20.